Here is a 139-residue protein sequence, read N- to C-terminus: Transcription antitermination protein NusB (139 aa).

It belongs to the NusB family.

Its function is as follows. Involved in transcription antitermination. Required for transcription of ribosomal RNA (rRNA) genes. Binds specifically to the boxA antiterminator sequence of the ribosomal RNA (rrn) operons. This chain is Transcription antitermination protein NusB, found in Baumannia cicadellinicola subsp. Homalodisca coagulata.